A 3418-amino-acid polypeptide reads, in one-letter code: Breast cancer type 2 susceptibility protein (3418 aa).

Positions 1–40 (MPIGSKERPTFFEIFKTRCNKADLGPISLNWFEELSSEAP) are interaction with PALB2. The tract at residues 37–68 (SEAPPYNSEPAEESEHKNNNYEPNLFKTPQRK) is disordered. At S70 the chain carries Phosphoserine. The disordered stretch occupies residues 358–381 (VEPNDTDPLDSNVANQKPFESGSD). Residues S445, S492, and S755 each carry the phosphoserine modification. An interaction with NPM1 region spans residues 639–1000 (LHSSVKRSCS…NKWAGLLGPI (362 aa)). BRCA2 repeat units follow at residues 1002 to 1036 (NHSF…DIEE), 1212 to 1246 (NEVG…DIEN), 1421 to 1455 (FETS…QKPE), 1517 to 1551 (KEPT…EKEQ), 1664 to 1698 (IENS…EGIF), and 1837 to 1871 (FEVG…DSFS). Positions 1003-2082 (HSFGGSFRTA…LHKVKGVLEE (1080 aa)) are interaction with RAD51. Residues 1338–1781 (GSDSSKNDTV…IEPVLKNVED (444 aa)) are interaction with POLH. Residues 1410–1595 (TATKTEQNIK…TAAPKCKEMQ (186 aa)) form a required for stimulation of POLH DNA polymerization activity region. Position 1970 is a phosphoserine (S1970). The stretch at 1971–2005 (SANTCGIFSTASGKSVQVSDASLQNARQVFSEIED) is one BRCA2 7 repeat. T2035 bears the Phosphothreonine mark. The stretch at 2051 to 2085 (NSSAFSGFSTASGKQVSILESSLHKVKGVLEEFDL) is one BRCA2 8 repeat. A Phosphoserine modification is found at S2095. Positions 2270–2337 (GKRRGEPLIL…EPITCVPFRT (68 aa)) are interaction with HSF2BP. The tract at residues 2350–2545 (TAPGQEFLSK…SHKQLYTYGV (196 aa)) is interaction with FANCD2. The segment at 2430–2450 (ENRQKQNIDGHGSDDSKNKIN) is disordered. Residues 2481–2832 (ITSLQNARDI…QRAYPIQWME (352 aa)) form an interaction with SEM1 region. Residues 2682-2698 (AAKTLVLCVSDIISLSA) carry the Nuclear export signal; masked by interaction with SEM1 motif. S3291 is subject to Phosphoserine; by CDK1 and CDK2. The residue at position 3319 (S3319) is a Phosphoserine. Phosphothreonine; by CHEK1 and CHEK2 is present on T3387. A disordered region spans residues 3393-3418 (EQESSQASTEECEKNKQDTITTKKYI).

Monomer and dimer. Interacts with RAD51; regulates RAD51 recruitment and function at sites of DNA repair. Interacts with WDR16, USP11, DMC1, ROCK2 and NPM1. Interacts with SEM1; the interaction masks a nuclear export signal in BRCA2. Interacts with both nonubiquitinated and monoubiquitinated FANCD2; this complex also includes XRCC3 and phosphorylated FANCG. Part of a BRCA complex containing BRCA1, BRCA2 and PALB2. Component of the homologous recombination repair (HR) complex composed of ERCC5/XPG, BRCA2, PALB2, DSS1 and RAD51. Within the complex, interacts with ERCC5/XPG and PALB2. Interacts directly with PALB2 which may serve as a scaffold for a HR complex containing PALB2, BRCA2, RAD51C, RAD51 and XRCC3. Interacts with BRCA1 only in the presence of PALB2 which serves as the bridging protein. Interacts with POLH; the interaction is direct. Interacts with the TREX-2 complex subunits PCID2 and SEM1. Interacts with HSF2BP and BRME1; the interaction with HSF2BP is direct and allows the formation of a ternary complex. The complex BRME1:HSF2BP:BRCA2 interacts with SPATA22, MEIOB and RAD51. Phosphorylated by ATM upon irradiation-induced DNA damage. Phosphorylation by CHEK1 and CHEK2 regulates interaction with RAD51. Phosphorylation at Ser-3291 by CDK1 and CDK2 is low in S phase when recombination is active, but increases as cells progress towards mitosis; this phosphorylation prevents homologous recombination-dependent repair during S phase and G2 by inhibiting RAD51 binding. In terms of processing, ubiquitinated in the absence of DNA damage; this does not lead to proteasomal degradation. In contrast, ubiquitination in response to DNA damage leads to proteasomal degradation. As to expression, highest levels of expression in breast and thymus, with slightly lower levels in lung, ovary and spleen.

It is found in the nucleus. Its subcellular location is the cytoplasm. It localises to the cytoskeleton. The protein localises to the microtubule organizing center. The protein resides in the centrosome. Its function is as follows. Involved in double-strand break repair and/or homologous recombination. Binds RAD51 and potentiates recombinational DNA repair by promoting assembly of RAD51 onto single-stranded DNA (ssDNA). Acts by targeting RAD51 to ssDNA over double-stranded DNA, enabling RAD51 to displace replication protein-A (RPA) from ssDNA and stabilizing RAD51-ssDNA filaments by blocking ATP hydrolysis. Part of a PALB2-scaffolded HR complex containing RAD51C and which is thought to play a role in DNA repair by HR. May participate in S phase checkpoint activation. Binds selectively to ssDNA, and to ssDNA in tailed duplexes and replication fork structures. May play a role in the extension step after strand invasion at replication-dependent DNA double-strand breaks; together with PALB2 is involved in both POLH localization at collapsed replication forks and DNA polymerization activity. In concert with NPM1, regulates centrosome duplication. Interacts with the TREX-2 complex (transcription and export complex 2) subunits PCID2 and SEM1, and is required to prevent R-loop-associated DNA damage and thus transcription-associated genomic instability. Silencing of BRCA2 promotes R-loop accumulation at actively transcribed genes in replicating and non-replicating cells, suggesting that BRCA2 mediates the control of R-loop associated genomic instability, independently of its known role in homologous recombination. This is Breast cancer type 2 susceptibility protein from Homo sapiens (Human).